A 257-amino-acid chain; its full sequence is DNA repair protein RecO (257 aa).

The protein belongs to the RecO family.

Functionally, involved in DNA repair and RecF pathway recombination. The protein is DNA repair protein RecO of Variovorax paradoxus (strain S110).